The primary structure comprises 251 residues: Ubiquinone/menaquinone biosynthesis C-methyltransferase UbiE (251 aa).

S-adenosyl-L-methionine is bound by residues threonine 74, aspartate 95, and 123–124 (NA).

It belongs to the class I-like SAM-binding methyltransferase superfamily. MenG/UbiE family.

The catalysed reaction is a 2-demethylmenaquinol + S-adenosyl-L-methionine = a menaquinol + S-adenosyl-L-homocysteine + H(+). It carries out the reaction a 2-methoxy-6-(all-trans-polyprenyl)benzene-1,4-diol + S-adenosyl-L-methionine = a 5-methoxy-2-methyl-3-(all-trans-polyprenyl)benzene-1,4-diol + S-adenosyl-L-homocysteine + H(+). The protein operates within quinol/quinone metabolism; menaquinone biosynthesis; menaquinol from 1,4-dihydroxy-2-naphthoate: step 2/2. Its pathway is cofactor biosynthesis; ubiquinone biosynthesis. In terms of biological role, methyltransferase required for the conversion of demethylmenaquinol (DMKH2) to menaquinol (MKH2) and the conversion of 2-polyprenyl-6-methoxy-1,4-benzoquinol (DDMQH2) to 2-polyprenyl-3-methyl-6-methoxy-1,4-benzoquinol (DMQH2). The protein is Ubiquinone/menaquinone biosynthesis C-methyltransferase UbiE of Shewanella baltica (strain OS223).